The following is a 160-amino-acid chain: Glyoxalase domain-containing protein 5 (160 aa).

A VOC domain is found at 33-153; it reads RLDHLVLTVR…DQNLIEVSNY (121 aa).

It belongs to the glyoxalase I family.

This Xenopus tropicalis (Western clawed frog) protein is Glyoxalase domain-containing protein 5 (glod5).